An 857-amino-acid polypeptide reads, in one-letter code: Protein translocase subunit SecA (857 aa).

ATP-binding positions include Gln88, 106–110, and Asp496; that span reads GEGKT. Residues Cys833, Cys835, Cys844, and Cys845 each contribute to the Zn(2+) site.

This sequence belongs to the SecA family. As to quaternary structure, monomer and homodimer. Part of the essential Sec protein translocation apparatus which comprises SecA, SecYEG and auxiliary proteins SecDF-YajC and YidC. It depends on Zn(2+) as a cofactor.

The protein resides in the cell inner membrane. It localises to the cytoplasm. It catalyses the reaction ATP + H2O + cellular proteinSide 1 = ADP + phosphate + cellular proteinSide 2.. In terms of biological role, part of the Sec protein translocase complex. Interacts with the SecYEG preprotein conducting channel. Has a central role in coupling the hydrolysis of ATP to the transfer of proteins into and across the cell membrane, serving as an ATP-driven molecular motor driving the stepwise translocation of polypeptide chains across the membrane. The chain is Protein translocase subunit SecA from Sulfurimonas denitrificans (strain ATCC 33889 / DSM 1251) (Thiomicrospira denitrificans (strain ATCC 33889 / DSM 1251)).